Here is a 489-residue protein sequence, read N- to C-terminus: 3-octaprenyl-4-hydroxybenzoate carboxy-lyase (489 aa).

A Mn(2+)-binding site is contributed by Asn172. Prenylated FMN-binding positions include 175–177, 189–191, and 194–195; these read IYR, RWL, and RG. Position 238 (Glu238) interacts with Mn(2+). Asp287 (proton donor) is an active-site residue.

It belongs to the UbiD family. In terms of assembly, homohexamer. It depends on prenylated FMN as a cofactor. The cofactor is Mn(2+).

Its subcellular location is the cell membrane. It carries out the reaction a 4-hydroxy-3-(all-trans-polyprenyl)benzoate + H(+) = a 2-(all-trans-polyprenyl)phenol + CO2. It functions in the pathway cofactor biosynthesis; ubiquinone biosynthesis. Functionally, catalyzes the decarboxylation of 3-octaprenyl-4-hydroxy benzoate to 2-octaprenylphenol, an intermediate step in ubiquinone biosynthesis. In Aeromonas hydrophila subsp. hydrophila (strain ATCC 7966 / DSM 30187 / BCRC 13018 / CCUG 14551 / JCM 1027 / KCTC 2358 / NCIMB 9240 / NCTC 8049), this protein is 3-octaprenyl-4-hydroxybenzoate carboxy-lyase.